Consider the following 72-residue polypeptide: Mitotic-spindle organizing protein 1 (72 aa).

The protein belongs to the MOZART1 family. As to quaternary structure, part of the gamma-tubulin complex.

It is found in the cytoplasm. Its subcellular location is the cytoskeleton. The protein localises to the microtubule organizing center. It localises to the centrosome. The protein resides in the spindle. In terms of biological role, required for gamma-tubulin complex recruitment to the centrosome. This chain is Mitotic-spindle organizing protein 1 (mzt1), found in Xenopus tropicalis (Western clawed frog).